The chain runs to 141 residues: ATP synthase F(0) complex subunit C2, mitochondrial (141 aa).

The N-terminal 66 residues, 1-66, are a transit peptide targeting the mitochondrion; that stretch reads MFSCFKFIST…RNFQTSAISR (66 aa). A helical membrane pass occupies residues 82–102; the sequence is VGVAGSGAGIGTVFGSLIIGY. An N6,N6,N6-trimethyllysine modification is found at lysine 109. A helical transmembrane segment spans residues 117 to 137; it reads ILGFALSEAMGLFCLMVAFLI.

Belongs to the ATPase C chain family. In terms of assembly, F-type ATPases have 2 components, CF(1) - the catalytic core - and CF(0) - the membrane proton channel. CF(1) has five subunits: alpha(3), beta(3), gamma(1), delta(1), epsilon(1). CF(0) has three main subunits: a, b and c. Interacts with DNAJC30; interaction is direct. Trimethylated by ATPSCKMT at Lys-109. Methylation is required for proper incorporation of the C subunit into the ATP synthase complex and mitochondrial respiration.

The protein localises to the mitochondrion membrane. Mitochondrial membrane ATP synthase (F(1)F(0) ATP synthase or Complex V) produces ATP from ADP in the presence of a proton gradient across the membrane which is generated by electron transport complexes of the respiratory chain. F-type ATPases consist of two structural domains, F(1) - containing the extramembraneous catalytic core and F(0) - containing the membrane proton channel, linked together by a central stalk and a peripheral stalk. During catalysis, ATP synthesis in the catalytic domain of F(1) is coupled via a rotary mechanism of the central stalk subunits to proton translocation. Part of the complex F(0) domain. A homomeric c-ring of probably 10 subunits is part of the complex rotary element. This Pongo abelii (Sumatran orangutan) protein is ATP synthase F(0) complex subunit C2, mitochondrial.